The following is a 233-amino-acid chain: Purine nucleoside phosphorylase DeoD-type (233 aa).

Position 4 (His4) interacts with a purine D-ribonucleoside. Phosphate is bound by residues Gly20, Arg24, Arg43, and 87-90 (RIGT). A purine D-ribonucleoside is bound by residues 179 to 181 (EME) and 203 to 204 (SD). The Proton donor role is filled by Asp204.

Belongs to the PNP/UDP phosphorylase family. Homohexamer; trimer of homodimers.

The enzyme catalyses a purine D-ribonucleoside + phosphate = a purine nucleobase + alpha-D-ribose 1-phosphate. It carries out the reaction a purine 2'-deoxy-D-ribonucleoside + phosphate = a purine nucleobase + 2-deoxy-alpha-D-ribose 1-phosphate. Functionally, catalyzes the reversible phosphorolytic breakdown of the N-glycosidic bond in the beta-(deoxy)ribonucleoside molecules, with the formation of the corresponding free purine bases and pentose-1-phosphate. The polypeptide is Purine nucleoside phosphorylase DeoD-type (Helicobacter pylori (strain P12)).